The primary structure comprises 696 residues: GPI mannosyltransferase 4 (696 aa).

6 consecutive transmembrane segments (helical) span residues 100-120 (WQLELLGTYAYVVFPRLIYTL), 125-142 (NDYCLFRICRLYGLRFEI), 149-169 (SSWILLVFGTRTFSNSLEMAM), 185-205 (NTVVYKKEFLEEKYDKAESIS), 227-247 (AMSTICVAGVFNRPTFLLFGA), and 338-358 (YVHLMVNMPMLFNVLALASLG).

The protein belongs to the glycosyltransferase 22 family. PIGZ subfamily.

The protein resides in the endoplasmic reticulum membrane. The protein operates within glycolipid biosynthesis; glycosylphosphatidylinositol-anchor biosynthesis. Mannosyltransferase involved in glycosylphosphatidylinositol-anchor biosynthesis. Transfers a fourth mannose to some trimannosyl-GPIs during GPI precursor assembly. The sequence is that of GPI mannosyltransferase 4 from Drosophila melanogaster (Fruit fly).